The primary structure comprises 377 residues: DNA primase small subunit PriS (377 aa).

Residues Asp-99, Asp-101, and Asp-274 contribute to the active site.

Belongs to the eukaryotic-type primase small subunit family. Heterodimer of a small subunit (PriS) and a large subunit (PriL). Mg(2+) serves as cofactor. Mn(2+) is required as a cofactor.

Catalytic subunit of DNA primase, an RNA polymerase that catalyzes the synthesis of short RNA molecules used as primers for DNA polymerase during DNA replication. The small subunit contains the primase catalytic core and has DNA synthesis activity on its own. Binding to the large subunit stabilizes and modulates the activity, increasing the rate of DNA synthesis while decreasing the length of the DNA fragments, and conferring RNA synthesis capability. The DNA polymerase activity may enable DNA primase to also catalyze primer extension after primer synthesis. May also play a role in DNA repair. The polypeptide is DNA primase small subunit PriS (Staphylothermus marinus (strain ATCC 43588 / DSM 3639 / JCM 9404 / F1)).